We begin with the raw amino-acid sequence, 357 residues long: MDVTHDMNGQKKWMQLPRNVVIGNGVINEVRDVCTDLKLIDNALVVTGKSTKGIAGEIVQDSLQDAGQNVELVISESASMKEVERIRKHAIESGTKYFLGVGSGKTIDVAKLAATDLEVPFISVPTAASHDGIVSSRASIKDGKTTTSVQANAPMAVIADTEIIANAPYRLLAAGCGDIISNCTAVLDWQLASRLQNVQFSEYAAALASMTAQILIDSADSIKPELESSVRMVVKALVSSGVAMSIAGSSRPASGSEHMFSHALDRVADEPALHGEQCGVGTILMMYLHGGDWKKISDALKLIGAPTTAKELGIEDKYILEALVLSHTIRPERYTILGTGLTPDAAEIVARKTKVIS.

NAD(+)-binding positions include 104–108 (GKTID) and 126–129 (TAAS). A substrate-binding site is contributed by D131. S135 lines the NAD(+) pocket. D178 is a substrate binding site. Residues D178 and H258 each coordinate Zn(2+). Position 262 (H262) interacts with substrate. H274 provides a ligand contact to Zn(2+).

The protein belongs to the glycerol-1-phosphate dehydrogenase family. The cofactor is Zn(2+).

The protein resides in the cytoplasm. It catalyses the reaction sn-glycerol 1-phosphate + NAD(+) = dihydroxyacetone phosphate + NADH + H(+). It carries out the reaction sn-glycerol 1-phosphate + NADP(+) = dihydroxyacetone phosphate + NADPH + H(+). It participates in membrane lipid metabolism; glycerophospholipid metabolism. In terms of biological role, catalyzes the NAD(P)H-dependent reduction of dihydroxyacetonephosphate (DHAP or glycerone phosphate) to glycerol 1-phosphate (G1P). The G1P thus generated is used as the glycerophosphate backbone of phospholipids in the cellular membranes of Archaea. In Methanococcoides burtonii (strain DSM 6242 / NBRC 107633 / OCM 468 / ACE-M), this protein is Glycerol-1-phosphate dehydrogenase [NAD(P)+].